The sequence spans 836 residues: Protein O-mannosyl-transferase TMTC2 (836 aa).

The chain crosses the membrane as a helical span at residues 1 to 21 (MIAELVSSALGLALYLNTLSA). At 22 to 77 (DFCYDDSRAIKTNQDLLPETPWTHIFYNDFWGTLLTHSGSHKSYRPLCTLSFRLNH) the chain is on the extracellular side. The helical transmembrane segment at 78-98 (AIGGLNPWSYHLVNVLLHAAV) threads the bilayer. Topologically, residues 99–107 (TGLFTRFSK) are cytoplasmic. Residues 108–128 (ALLGDGYWTFMAGLMFASHPI) form a helical membrane-spanning segment. Topologically, residues 129 to 132 (HTEA) are extracellular. A helical membrane pass occupies residues 133 to 153 (VAGIVGRADVGASLFFLLSLL). Residues 154–168 (CYIKHCSTRGYSART) are Cytoplasmic-facing. The next 2 helical transmembrane spans lie at 169–184 (WGWFLGTGLCAGCSML) and 185–204 (WKEQGVTVLAVSAVYDVFVF). Over 205–220 (HRLKMKQILPTIYKRK) the chain is Cytoplasmic. Residues 221–241 (NLSLFLSISLLTFWGTCLLGA) traverse the membrane as a helical segment. Residues 242–312 (RLYWMGNKPP…KTVCDWRNLH (71 aa)) are Extracellular-facing. The helical transmembrane segment at 313–333 (TVAFYSGLLLLAYCGLKNPSL) threads the bilayer. At 334–392 (EGECNGKALTNGKQNANGHSCHSDVEYRNSEMKPSFASKVENGIKNCVPQRTQLPSTEN) the chain is on the cytoplasmic side. Residues 393-415 (IVILSLSLLIIPFIPATNLFFYV) traverse the membrane as a helical segment. Over 416–422 (GFVIAER) the chain is Extracellular. Residues 423-443 (VLYIPSMGFCLLITVGARALY) traverse the membrane as a helical segment. At 444–449 (VKVQKR) the chain is on the cytoplasmic side. Residues 450-470 (FLKSLVFYATATLIVFYGVKT) traverse the membrane as a helical segment. The Extracellular segment spans residues 471 to 836 (AIRNGDWQNE…EKQGLKTSKT (366 aa)). 9 TPR repeats span residues 493 to 526 (AKAWGNLGNVLKSQSKISEAESAYRNALFYRSNM), 527 to 560 (ADMLYNLGLLLQENSRFAEALHYYKLAIGSRPTL), 561 to 594 (ASAYLNTGIILMNQGKTEEARRTFLKCSEIPDEN), 606 to 639 (TSCLYNLGKLYHEQGRYEEALSVYREAIQKMPRH), 643 to 676 (QSLYNMMGEAYMRLSKLPEAEHWYMESLRSKTDH), 677 to 710 (IPAHLTYGKLLALTGRKSEAEKFFLKAIELDPTK), 711 to 744 (GNCYMHYGQFLLEESRLTEAAEMAKKAAELDNTE), 745 to 778 (FDVVFNAAHMLRQASLNEAAEKYYDLAARLRPNY), and 779 to 812 (PAALMNLGAILHLNGRLQKAEANYLRALQLKPDD).

The protein belongs to the TMTC family.

The protein resides in the membrane. The protein localises to the endoplasmic reticulum. The enzyme catalyses a di-trans,poly-cis-dolichyl beta-D-mannosyl phosphate + L-seryl-[protein] = 3-O-(alpha-D-mannosyl)-L-seryl-[protein] + a di-trans,poly-cis-dolichyl phosphate + H(+). It carries out the reaction a di-trans,poly-cis-dolichyl beta-D-mannosyl phosphate + L-threonyl-[protein] = 3-O-(alpha-D-mannosyl)-L-threonyl-[protein] + a di-trans,poly-cis-dolichyl phosphate + H(+). The protein operates within protein modification; protein glycosylation. In terms of biological role, transfers mannosyl residues to the hydroxyl group of serine or threonine residues. The 4 members of the TMTC family are O-mannosyl-transferases dedicated primarily to the cadherin superfamily, each member seems to have a distinct role in decorating the cadherin domains with O-linked mannose glycans at specific regions. Also acts as O-mannosyl-transferase on other proteins such as PDIA3. This chain is Protein O-mannosyl-transferase TMTC2, found in Mus musculus (Mouse).